The following is a 253-amino-acid chain: E3 ubiquitin-protein ligase MARCHF3 (253 aa).

The RING-CH-type zinc finger occupies 63–123; it reads SPFNDRPMCR…ELCHFRFAVE (61 aa). Zn(2+)-binding residues include C71, C74, C87, C89, H97, C100, C113, and C116. Transmembrane regions (helical) follow at residues 145 to 165 and 182 to 202; these read LFGD…SGWL and AVGL…WTLV. Phosphoserine is present on residues S237 and S243.

Interacts with MARCHF2 and STX6. In terms of tissue distribution, expressed predominantly in lung, colon and spleen. Present in liver (at protein level).

The protein resides in the cytoplasmic vesicle membrane. Its subcellular location is the early endosome membrane. The catalysed reaction is S-ubiquitinyl-[E2 ubiquitin-conjugating enzyme]-L-cysteine + [acceptor protein]-L-lysine = [E2 ubiquitin-conjugating enzyme]-L-cysteine + N(6)-ubiquitinyl-[acceptor protein]-L-lysine.. Its pathway is protein modification; protein ubiquitination. Functionally, E3 ubiquitin-protein ligase which may be involved in endosomal trafficking. E3 ubiquitin ligases accept ubiquitin from an E2 ubiquitin-conjugating enzyme in the form of a thioester and then directly transfer the ubiquitin to targeted substrates. The polypeptide is E3 ubiquitin-protein ligase MARCHF3 (Marchf3) (Rattus norvegicus (Rat)).